Reading from the N-terminus, the 430-residue chain is MANVVVVGAQWGDEGKGKIVDWLSERADVIARFQGGHNAGHTLVIDGEVYKLHALPSGVVRGGKLSVIGNGVVLDPWHLVKEIATIRDQGVEITPETLMIAENTPLILPFHGELDRARENQNSVAKIGTTGRGIGPAYEDKVGRRVIRVADLADAATLELRVDRALVHHNALRSGLGLDPIDRDALLVSLREIAPQILPFAAPVWKVLNEKRKAGKRILFEGAQGALLDIDFGTYPFVTSSNVIAGQAATGVGIGPGAIDYVLGIVKAYTTRVGEGPFPTELDDADGERLGTRGHEFGTTTGRKRRCGWFDAALLRQTCATSGINGIALTKLDVLDGFETLKICVGYDLDGTRLDYLPTAADQQARCTPIYEEMPGWSESTEGARSWADLPANAIKYVRRVEELIDCPVAMVSTSPEREDTILVTDPFAD.

Residues 12 to 18 and 40 to 42 each bind GTP; these read GDEGKGK and GHT. The active-site Proton acceptor is D13. D13 and G40 together coordinate Mg(2+). Residues 13 to 16, 38 to 41, T130, R144, Q224, T239, and R303 each bind IMP; these read DEGK and NAGH. H41 (proton donor) is an active-site residue. 299–305 is a substrate binding site; the sequence is TTTGRKR. Residues R305, 331–333, and 413–415 each bind GTP; these read KLD and STS.

The protein belongs to the adenylosuccinate synthetase family. As to quaternary structure, homodimer. Mg(2+) is required as a cofactor.

It is found in the cytoplasm. It carries out the reaction IMP + L-aspartate + GTP = N(6)-(1,2-dicarboxyethyl)-AMP + GDP + phosphate + 2 H(+). The protein operates within purine metabolism; AMP biosynthesis via de novo pathway; AMP from IMP: step 1/2. In terms of biological role, plays an important role in the de novo pathway of purine nucleotide biosynthesis. Catalyzes the first committed step in the biosynthesis of AMP from IMP. In Ruegeria pomeroyi (strain ATCC 700808 / DSM 15171 / DSS-3) (Silicibacter pomeroyi), this protein is Adenylosuccinate synthetase.